Here is a 1006-residue protein sequence, read N- to C-terminus: Unconventional myosin-Id (1006 aa).

Ala2 is modified (N-acetylalanine). A Myosin motor domain is found at 9 to 695; it reads FGKADFVLMD…TLFTLEELRA (687 aa). 102 to 109 provides a ligand contact to ATP; that stretch reads GESGAGKT. Position 200 is a phosphoserine (Ser200). Phosphotyrosine is present on Tyr536. An actin-binding region spans residues 572–594; that stretch reads MIALVDNLASKEPYYVRCIKPND. 2 IQ domains span residues 699 to 719 and 721 to 741; these read VRIVLFLQKVWRGTLARMRYK and TKAALTIIRYYRRYKVKSYIH. In terms of domain architecture, TH1 spans 812–1005; the sequence is GQRADLGLQR…RSGFILSVPG (194 aa).

Belongs to the TRAFAC class myosin-kinesin ATPase superfamily. Myosin family. In terms of assembly, interacts (via the two IQ motifs) with calmodulin. Binds an additional calmodulin chain via a third, C-terminal region. Interacts with F-actin.

The protein resides in the cytoplasm. It is found in the perikaryon. Its subcellular location is the cell projection. It localises to the dendrite. The protein localises to the early endosome. The protein resides in the cell cortex. Functionally, unconventional myosin that functions as actin-based motor protein with ATPase activity. Plays a role in endosomal protein trafficking, and especially in the transfer of cargo proteins from early to recycling endosomes. Required for normal planar cell polarity in ciliated tracheal cells, for normal rotational polarity of cilia, and for coordinated, unidirectional ciliary movement in the trachea. Required for normal, polarized cilia organization in brain ependymal epithelial cells. The protein is Unconventional myosin-Id (MYO1D) of Bos taurus (Bovine).